Consider the following 1430-residue polypeptide: DNA-directed RNA polymerase subunit beta' (1430 aa).

Residues Cys70, Cys72, Cys85, and Cys88 each contribute to the Zn(2+) site. Asp495, Asp497, and Asp499 together coordinate Mg(2+). Zn(2+)-binding residues include Cys838, Cys912, Cys919, and Cys922.

This sequence belongs to the RNA polymerase beta' chain family. As to quaternary structure, the RNAP catalytic core consists of 2 alpha, 1 beta, 1 beta' and 1 omega subunit. When a sigma factor is associated with the core the holoenzyme is formed, which can initiate transcription. Requires Mg(2+) as cofactor. It depends on Zn(2+) as a cofactor.

The enzyme catalyses RNA(n) + a ribonucleoside 5'-triphosphate = RNA(n+1) + diphosphate. DNA-dependent RNA polymerase catalyzes the transcription of DNA into RNA using the four ribonucleoside triphosphates as substrates. This Rhodospirillum centenum (strain ATCC 51521 / SW) protein is DNA-directed RNA polymerase subunit beta'.